The sequence spans 452 residues: Maltoporin (452 aa).

Residues Met1–Ala25 form the signal peptide.

Belongs to the porin LamB (TC 1.B.3) family. Homotrimer formed of three 18-stranded antiparallel beta-barrels, containing three independent channels.

It localises to the cell outer membrane. The catalysed reaction is beta-maltose(in) = beta-maltose(out). In terms of biological role, involved in the transport of maltose and maltodextrins. In Salmonella heidelberg (strain SL476), this protein is Maltoporin.